We begin with the raw amino-acid sequence, 406 residues long: Tryptophan 2,3-dioxygenase (406 aa).

Ser-19 carries the post-translational modification Phosphoserine. Residues 72–76 and Arg-144 contribute to the substrate site; that span reads FIITH. His-328 contacts heme. Residue Thr-342 participates in substrate binding.

It belongs to the tryptophan 2,3-dioxygenase family. In terms of assembly, homotetramer. Dimer of dimers. It depends on heme as a cofactor.

It catalyses the reaction L-tryptophan + O2 = N-formyl-L-kynurenine. It functions in the pathway amino-acid degradation; L-tryptophan degradation via kynurenine pathway; L-kynurenine from L-tryptophan: step 1/2. Functionally, heme-dependent dioxygenase that catalyzes the oxidative cleavage of the L-tryptophan (L-Trp) pyrrole ring and converts L-tryptophan to N-formyl-L-kynurenine. Catalyzes the oxidative cleavage of the indole moiety. This Mus musculus (Mouse) protein is Tryptophan 2,3-dioxygenase.